The following is a 428-amino-acid chain: 3-phosphoshikimate 1-carboxyvinyltransferase (428 aa).

Positions 23, 24, and 28 each coordinate 3-phosphoshikimate. Residue Lys-23 participates in phosphoenolpyruvate binding. The phosphoenolpyruvate site is built by Gly-97 and Arg-125. Ser-170, Ser-171, Gln-172, Ser-198, Asp-314, Asn-337, and Lys-341 together coordinate 3-phosphoshikimate. A phosphoenolpyruvate-binding site is contributed by Gln-172. The active-site Proton acceptor is the Asp-314. 3 residues coordinate phosphoenolpyruvate: Arg-345, Arg-387, and Lys-412.

This sequence belongs to the EPSP synthase family. Monomer.

It is found in the cytoplasm. It carries out the reaction 3-phosphoshikimate + phosphoenolpyruvate = 5-O-(1-carboxyvinyl)-3-phosphoshikimate + phosphate. It participates in metabolic intermediate biosynthesis; chorismate biosynthesis; chorismate from D-erythrose 4-phosphate and phosphoenolpyruvate: step 6/7. Its function is as follows. Catalyzes the transfer of the enolpyruvyl moiety of phosphoenolpyruvate (PEP) to the 5-hydroxyl of shikimate-3-phosphate (S3P) to produce enolpyruvyl shikimate-3-phosphate and inorganic phosphate. This is 3-phosphoshikimate 1-carboxyvinyltransferase from Yersinia pseudotuberculosis serotype IB (strain PB1/+).